The chain runs to 61 residues: Temporin-SN3 (61 aa).

An N-terminal signal peptide occupies residues 1 to 22 (MFTLKKTLLLLFFLGTINLSLC). A propeptide spans 23-44 (EEERNAEEERRDGDDEMDVEVK) (removed in mature form). Residue K61 is modified to Lysine amide.

Belongs to the frog skin active peptide (FSAP) family. Temporin subfamily. In terms of tissue distribution, expressed by the skin glands.

It is found in the secreted. Functionally, antimicrobial peptide. Active against some Gram-positive and Gram-negative bacterial strains. Active against fungus C.glabrata 090902 but not against C.albicans ATCC 12231. Shows weak hemolytic activity against human erythrocytes. This chain is Temporin-SN3, found in Sylvirana spinulosa (Fine-spined frog).